The primary structure comprises 441 residues: MRIGLFTDTYFPQVSGVATSIRTLKTELEKQGHAVFIFTTTDKDVNRYEDWQIIRIPSVPFFAFKDRRFAYRGFSKALEIAKQYQLDIIHTQTEFSLGLLGIWIARELKIPVIHTYHTQYEDYVHYIAKGMLIRPSMVKYLVRGFLHDVDGVICPSEIVRDLLSDYKVKVEKRVIPTGIELAKFERPEIKQENLKELRSKLGIQDGEKTLLSLSRISYEKNIQAVLVAFADVLKEEDKVKLVVAGDGPYLNDLKEQAQNLEIQDSVIFTGMIAPSETALYYKAADFFISASTSETQGLTYLESLASGTPVIAHGNPYLNNLISDKMFGALYYGEHDLAGAILEALIATPDMNEHTLSEKLYEISAENFGKRVHEFYLDAIISNNFQKDLAKDDTVSQRIFKTVLYLPQQVVAVPVKGSRRMLKASKTQLISMRDYWKDHEE.

Belongs to the glycosyltransferase group 1 family. Glycosyltransferase 4 subfamily. The cofactor is Mg(2+).

It is found in the cell membrane. It catalyses the reaction a 1,2-diacyl-sn-glycerol + UDP-alpha-D-glucose = a 1,2-diacyl-3-O-(alpha-D-glucopyranosyl)-sn-glycerol + UDP + H(+). With respect to regulation, activated by the negatively charged lipid phosphatidylglycerol (PG). In terms of biological role, glucosyltransferase involved in the biosynthesis of the non-bilayer-prone membrane lipid alpha-monoglucosyldiacylglycerol. This is a major component for maintaining a certain anionic lipid surface charge density, for balancing the bilayer to non-bilayer phase equilibria and for keeping a constant lipid bilayer spontaneous curvature (curvature packing stress). Catalyzes the transfer of a glucosyl residue from UDP-Glc to diacylglycerol (DAG) acceptor to form the corresponding alpha-glucosyl-DAG (1,2-diacyl-3-O-(alpha-D-glucopyranosyl)-sn-glycerol). It can only use UDP-Glc as sugar donor. In Streptococcus pneumoniae (strain ATCC BAA-255 / R6), this protein is Alpha-monoglucosyldiacylglycerol synthase.